A 227-amino-acid chain; its full sequence is Protein MobD (227 aa).

In Acidithiobacillus ferrooxidans (Thiobacillus ferrooxidans), this protein is Protein MobD (mobD).